A 510-amino-acid polypeptide reads, in one-letter code: Lysine--tRNA ligase (510 aa).

The Mg(2+) site is built by Glu-420 and Glu-427.

It belongs to the class-II aminoacyl-tRNA synthetase family. As to quaternary structure, homodimer. It depends on Mg(2+) as a cofactor.

It is found in the cytoplasm. The enzyme catalyses tRNA(Lys) + L-lysine + ATP = L-lysyl-tRNA(Lys) + AMP + diphosphate. The sequence is that of Lysine--tRNA ligase (lysS) from Vibrio cholerae serotype O1 (strain ATCC 39315 / El Tor Inaba N16961).